Here is a 194-residue protein sequence, read N- to C-terminus: Probable GTP-binding protein EngB (194 aa).

One can recognise an EngB-type G domain in the interval 22 to 194 (DLPEYALAGR…AWQFIKEGME (173 aa)). Residues 30 to 37 (GRSNVGKS), 57 to 61 (GKTQT), 75 to 78 (DVPG), 142 to 145 (TKAD), and 174 to 176 (FSS) contribute to the GTP site. Residues Ser37 and Thr59 each contribute to the Mg(2+) site.

It belongs to the TRAFAC class TrmE-Era-EngA-EngB-Septin-like GTPase superfamily. EngB GTPase family. Mg(2+) serves as cofactor.

Its function is as follows. Necessary for normal cell division and for the maintenance of normal septation. The protein is Probable GTP-binding protein EngB of Listeria innocua serovar 6a (strain ATCC BAA-680 / CLIP 11262).